Reading from the N-terminus, the 518-residue chain is Serine--tRNA ligase, mitochondrial (518 aa).

The N-terminal 34 residues, 1-34 (MAASIVRRLGPLVAGRGLRLRGGCVCNQSFKRSF), are a transit peptide targeting the mitochondrion. An N6-acetyllysine modification is found at lysine 110. N6-succinyllysine is present on lysine 195. 299-301 (TAE) lines the L-serine pocket. 330–332 (RAE) is an ATP binding site. Lysine 337 carries the N6-succinyllysine modification. Valine 345 contacts ATP. Glutamate 352 is an L-serine binding site. 418 to 421 (EVTS) contributes to the ATP binding site. Threonine 453 contributes to the L-serine binding site. Residues 497-518 (PLQYIGPNQPQKPRLPGQPASS) form a disordered region.

Belongs to the class-II aminoacyl-tRNA synthetase family. Type-1 seryl-tRNA synthetase subfamily. In terms of assembly, homodimer. The tRNA molecule probably binds across the dimer. Post-translationally, two N-termini starting at positions 35 and 37 have been identified by direct sequencing.

It is found in the mitochondrion matrix. The catalysed reaction is tRNA(Ser) + L-serine + ATP = L-seryl-tRNA(Ser) + AMP + diphosphate + H(+). The enzyme catalyses tRNA(Sec) + L-serine + ATP = L-seryl-tRNA(Sec) + AMP + diphosphate + H(+). The protein operates within aminoacyl-tRNA biosynthesis; selenocysteinyl-tRNA(Sec) biosynthesis; L-seryl-tRNA(Sec) from L-serine and tRNA(Sec): step 1/1. Its function is as follows. Catalyzes the attachment of serine to tRNA(Ser). Is also probably able to aminoacylate tRNA(Sec) with serine, to form the misacylated tRNA L-seryl-tRNA(Sec), which will be further converted into selenocysteinyl-tRNA(Sec). This is Serine--tRNA ligase, mitochondrial (SARS2) from Bos taurus (Bovine).